Consider the following 164-residue polypeptide: Choriogonadotropin subunit beta (164 aa).

The first 20 residues, 1-20, serve as a signal peptide directing secretion; sequence MEMLQGLLLCLLLSTGGAWA. Disulfide bonds link Cys29-Cys77, Cys43-Cys92, Cys46-Cys130, Cys54-Cys108, Cys58-Cys110, and Cys113-Cys120. N-linked (GlcNAc...) asparagine glycosylation is present at Asn50. The segment at 133–164 is disordered; sequence HTSQDSSSKDPPRNLTSPSQLPEPADAPLVPQ. Ser140 carries an O-linked (GalNAc...) serine glycan. The N-linked (GlcNAc...) asparagine glycan is linked to Asn146. O-linked (GalNAc...) serine glycosylation occurs at Ser151.

Belongs to the glycoprotein hormones subunit beta family. In terms of assembly, heterodimer of a common alpha chain and a unique beta chain which confers biological specificity to thyrotropin, lutropin, follitropin and gonadotropin.

It localises to the secreted. In terms of biological role, stimulates the ovaries to synthesize the steroids that are essential for the maintenance of pregnancy. The chain is Choriogonadotropin subunit beta (CGB) from Aotus nancymaae (Ma's night monkey).